A 51-amino-acid polypeptide reads, in one-letter code: MTHSCKCGDSCQCGDKCTCGPKETPKCGCSDCKCGDKCSSDCKCTSCTCKK.

This is an uncharacterized protein from Dictyostelium discoideum (Social amoeba).